The following is a 129-amino-acid chain: Transcription antitermination protein NusB (129 aa).

It belongs to the NusB family.

Its function is as follows. Involved in transcription antitermination. Required for transcription of ribosomal RNA (rRNA) genes. Binds specifically to the boxA antiterminator sequence of the ribosomal RNA (rrn) operons. The chain is Transcription antitermination protein NusB from Staphylococcus aureus (strain N315).